Reading from the N-terminus, the 615-residue chain is Sodium-dependent dopamine transporter (615 aa).

Residues 1 to 39 (MQLVPTDDPDEKIGRTSNGMQNATLPIDGPVNTEPKDPA) form a disordered region. Topologically, residues 1–46 (MQLVPTDDPDEKIGRTSNGMQNATLPIDGPVNTEPKDPAREQWSGK) are cytoplasmic. Residues 15–24 (RTSNGMQNAT) are compositionally biased toward polar residues. A helical transmembrane segment spans residues 47–72 (LDFLLSVVGFAVDLGNIWRFPYLCFK). Na(+) is bound by residues Gly-55, Ala-57, Val-58, and Asn-62. Topologically, residues 73-76 (NGGG) are extracellular. Residues 77-100 (VFLIPYSIMVLLTGVPLFYMELCL) form a helical membrane-spanning segment. Residues 101 to 120 (GQYYRKGAITTWGRICPLFK) lie on the Cytoplasmic side of the membrane. The helical transmembrane segment at 121 to 151 (GIGYCVILTAFYVDFFYNVILAWGLHYLYTS) threads the bilayer. Residues 152-229 (FSFNLPWASC…IRSVTDLGNV (78 aa)) are Extracellular-facing. Cys-161 and Cys-170 form a disulfide bridge. Asn-162 and Asn-187 each carry an N-linked (GlcNAc...) asparagine glycan. Residues 230–250 (RWDIALSLFVVYLICYFSMWK) form a helical membrane-spanning segment. The Cytoplasmic segment spans residues 251-253 (GIH). Residues 254 to 278 (TSGKVVWFTALFPYVVLGILFIRGV) form a helical membrane-spanning segment. Residues 279-302 (TLPGWQNGIEYYLRPNFEMLKRPS) are Extracellular-facing. The chain crosses the membrane as a helical span at residues 303–328 (VWQDAATQVFFSLGPGFGVLMAYSSY). Residue Ser-314 coordinates Na(+). The Cytoplasmic segment spans residues 329 to 334 (NDFHNN). The helical transmembrane segment at 335–358 (VYVDALFTSFINCATSFLSGFVIF) threads the bilayer. A Na(+)-binding site is contributed by Asn-346. Topologically, residues 359-398 (SVLGYMSCKSGKPIEAVAQEGPGLVFVVYPEALSTMPYAP) are extracellular. A helical transmembrane segment spans residues 399–424 (FWSVLFFLMLMTLGLDSSFGGSEAII). Positions 411, 414, and 415 each coordinate Na(+). Topologically, residues 425 to 439 (TGLSDEFPILKKNRE) are cytoplasmic. The helical transmembrane segment at 440 to 460 (VFVGCLFAFYMVIGIAMCTEG) threads the bilayer. Gly-461 is a topological domain (extracellular). Residues 462–488 (ILIMEWLIIYGTTWGLLIAVFCEAMVI) traverse the membrane as a helical segment. At 489-518 (AYIYGLRQFVHDVKEMMGFRPGNYWKFCWS) the chain is on the cytoplasmic side. Residues 519 to 541 (CAAPFILLSMITSNFINYQALTY) form a helical membrane-spanning segment. The Extracellular portion of the chain corresponds to 542–544 (QDY). A helical transmembrane segment spans residues 545 to 565 (TYPTAANVIGIIFALSGASFI). Over 566 to 615 (PLVGIYKFVNARGNTISEKWQRVTMPYRKRPNQTEYIPIPTTQPHSDIML) the chain is Cytoplasmic.

This sequence belongs to the sodium:neurotransmitter symporter (SNF) (TC 2.A.22) family.

It localises to the cell membrane. Its function is as follows. Dopamine transporter. Terminates the action of dopamine by its high affinity sodium-dependent reuptake into presynaptic terminals. Plays a role in the learned avoidance behavior of animals exposed to food that induces mitochondrial stress. The chain is Sodium-dependent dopamine transporter from Caenorhabditis elegans.